The primary structure comprises 176 residues: Lipoprotein signal peptidase (176 aa).

4 consecutive transmembrane segments (helical) span residues Ala-11 to Leu-31, Ala-38 to Phe-58, Trp-76 to His-96, and Leu-101 to Leu-121. Active-site residues include Asp-128 and Asp-146. Residues Trp-139–Ala-159 form a helical membrane-spanning segment.

The protein belongs to the peptidase A8 family.

Its subcellular location is the cell inner membrane. The enzyme catalyses Release of signal peptides from bacterial membrane prolipoproteins. Hydrolyzes -Xaa-Yaa-Zaa-|-(S,diacylglyceryl)Cys-, in which Xaa is hydrophobic (preferably Leu), and Yaa (Ala or Ser) and Zaa (Gly or Ala) have small, neutral side chains.. The protein operates within protein modification; lipoprotein biosynthesis (signal peptide cleavage). Functionally, this protein specifically catalyzes the removal of signal peptides from prolipoproteins. The protein is Lipoprotein signal peptidase of Azoarcus sp. (strain BH72).